The sequence spans 389 residues: Phosphoglycerate kinase (389 aa).

Residues 21–23 (DLN), Arg-36, 59–62 (HLGR), Arg-112, and Arg-145 contribute to the substrate site. ATP-binding positions include Lys-196, Glu-313, and 342 to 345 (GGDT).

This sequence belongs to the phosphoglycerate kinase family. As to quaternary structure, monomer.

The protein resides in the cytoplasm. It carries out the reaction (2R)-3-phosphoglycerate + ATP = (2R)-3-phospho-glyceroyl phosphate + ADP. It functions in the pathway carbohydrate degradation; glycolysis; pyruvate from D-glyceraldehyde 3-phosphate: step 2/5. The polypeptide is Phosphoglycerate kinase (Histophilus somni (strain 2336) (Haemophilus somnus)).